The sequence spans 567 residues: Oxygen-dependent choline dehydrogenase (567 aa).

FAD is bound at residue 6 to 35 (DYIIVGAGSAGNTLATRLTEDEGVTVLLLE). His-475 (proton acceptor) is an active-site residue.

Belongs to the GMC oxidoreductase family. FAD is required as a cofactor.

It catalyses the reaction choline + A = betaine aldehyde + AH2. The enzyme catalyses betaine aldehyde + NAD(+) + H2O = glycine betaine + NADH + 2 H(+). It participates in amine and polyamine biosynthesis; betaine biosynthesis via choline pathway; betaine aldehyde from choline (cytochrome c reductase route): step 1/1. Involved in the biosynthesis of the osmoprotectant glycine betaine. Catalyzes the oxidation of choline to betaine aldehyde and betaine aldehyde to glycine betaine at the same rate. The polypeptide is Oxygen-dependent choline dehydrogenase (Pseudomonas fluorescens (strain SBW25)).